The primary structure comprises 225 residues: MVMETESKFHVLAVDDSLFDRKMIERLLQKSSCQVTTVDSGSKALEFLGLRVDDNDPNALSTSPQIHQEVEINLIITDYCMPGMTGYDLLKKVKESAAFRSIPVVIMSSENVPARISRCLEEGAEEFFLKPVKLADLTKLKPHMMKTKLKKESEKPVAIEEIVVSKPEIEEEEEESSVIEILPLHQEIESEQLEPMLSSNKRKAMEEVVSTDRSRPKYNDITTSV.

The region spanning 10–145 (HVLAVDDSLF…DLTKLKPHMM (136 aa)) is the Response regulatory domain. A 4-aspartylphosphate modification is found at aspartate 78.

It belongs to the ARR family. Type-A subfamily. In terms of processing, two-component system major event consists of a His-to-Asp phosphorelay between a sensor histidine kinase (HK) and a response regulator (RR). In plants, the His-to-Asp phosphorelay involves an additional intermediate named Histidine-containing phosphotransfer protein (HPt). This multistep phosphorelay consists of a His-Asp-His-Asp sequential transfer of a phosphate group between first a His and an Asp of the HK protein, followed by the transfer to a conserved His of the HPt protein and finally the transfer to an Asp in the receiver domain of the RR protein. Predominantly expressed in roots.

The protein localises to the nucleus. In terms of biological role, functions as a response regulator involved in His-to-Asp phosphorelay signal transduction system. Phosphorylation of the Asp residue in the receiver domain activates the ability of the protein to promote the transcription of target genes. Type-A response regulators seem to act as negative regulators of the cytokinin signaling. The sequence is that of Two-component response regulator ARR8 (ARR8) from Arabidopsis thaliana (Mouse-ear cress).